We begin with the raw amino-acid sequence, 150 residues long: Large ribosomal subunit protein bL9 (150 aa).

It belongs to the bacterial ribosomal protein bL9 family.

Functionally, binds to the 23S rRNA. This Alteromonas mediterranea (strain DSM 17117 / CIP 110805 / LMG 28347 / Deep ecotype) protein is Large ribosomal subunit protein bL9.